The following is a 454-amino-acid chain: Cerebellar degeneration-related protein 2 (454 aa).

Coiled coils occupy residues 44 to 142 and 192 to 265; these read ELED…SGQG and EEEN…QSEH. The interval 134 to 153 is disordered; sequence EELKSSGQGRRSPGKCDQEK. Residue Ser-311 is modified to Phosphoserine. A coiled-coil region spans residues 346-380; that stretch reads LHEVDTQYSALKVKYEELLKKCQEEQDSLSHKAVQ.

Belongs to the CDR2 family.

In Homo sapiens (Human), this protein is Cerebellar degeneration-related protein 2 (CDR2).